Here is a 693-residue protein sequence, read N- to C-terminus: Phosphoribosylformylglycinamidine synthase subunit PurL (693 aa).

His34 is an active-site residue. ATP is bound by residues Tyr37 and Lys76. A Mg(2+)-binding site is contributed by Glu78. Residues 79–82 (SHNH) and Arg101 each bind substrate. His80 (proton acceptor) is an active-site residue. Asp102 contacts Mg(2+). Gln222 provides a ligand contact to substrate. Asp248 contributes to the Mg(2+) binding site. 292–294 (ETQ) contributes to the substrate binding site. 2 residues coordinate ATP: Asp470 and Gly507. Residue Ser510 participates in substrate binding.

The protein belongs to the FGAMS family. As to quaternary structure, monomer. Part of the FGAM synthase complex composed of 1 PurL, 1 PurQ and 2 PurS subunits.

It is found in the cytoplasm. The enzyme catalyses N(2)-formyl-N(1)-(5-phospho-beta-D-ribosyl)glycinamide + L-glutamine + ATP + H2O = 2-formamido-N(1)-(5-O-phospho-beta-D-ribosyl)acetamidine + L-glutamate + ADP + phosphate + H(+). Its pathway is purine metabolism; IMP biosynthesis via de novo pathway; 5-amino-1-(5-phospho-D-ribosyl)imidazole from N(2)-formyl-N(1)-(5-phospho-D-ribosyl)glycinamide: step 1/2. Functionally, part of the phosphoribosylformylglycinamidine synthase complex involved in the purines biosynthetic pathway. Catalyzes the ATP-dependent conversion of formylglycinamide ribonucleotide (FGAR) and glutamine to yield formylglycinamidine ribonucleotide (FGAM) and glutamate. The FGAM synthase complex is composed of three subunits. PurQ produces an ammonia molecule by converting glutamine to glutamate. PurL transfers the ammonia molecule to FGAR to form FGAM in an ATP-dependent manner. PurS interacts with PurQ and PurL and is thought to assist in the transfer of the ammonia molecule from PurQ to PurL. In Pyrobaculum islandicum (strain DSM 4184 / JCM 9189 / GEO3), this protein is Phosphoribosylformylglycinamidine synthase subunit PurL.